The primary structure comprises 391 residues: 4-hydroxy-3-methylbut-2-en-1-yl diphosphate synthase (flavodoxin) (391 aa).

Residues Cys-286, Cys-289, Cys-321, and Glu-328 each contribute to the [4Fe-4S] cluster site.

This sequence belongs to the IspG family. [4Fe-4S] cluster is required as a cofactor.

The enzyme catalyses (2E)-4-hydroxy-3-methylbut-2-enyl diphosphate + oxidized [flavodoxin] + H2O + 2 H(+) = 2-C-methyl-D-erythritol 2,4-cyclic diphosphate + reduced [flavodoxin]. Its pathway is isoprenoid biosynthesis; isopentenyl diphosphate biosynthesis via DXP pathway; isopentenyl diphosphate from 1-deoxy-D-xylulose 5-phosphate: step 5/6. Functionally, converts 2C-methyl-D-erythritol 2,4-cyclodiphosphate (ME-2,4cPP) into 1-hydroxy-2-methyl-2-(E)-butenyl 4-diphosphate. The chain is 4-hydroxy-3-methylbut-2-en-1-yl diphosphate synthase (flavodoxin) from Corynebacterium diphtheriae (strain ATCC 700971 / NCTC 13129 / Biotype gravis).